The primary structure comprises 274 residues: 2,3,4,5-tetrahydropyridine-2,6-dicarboxylate N-succinyltransferase (274 aa).

Arg106 and Asp143 together coordinate substrate.

Belongs to the transferase hexapeptide repeat family. In terms of assembly, homotrimer.

Its subcellular location is the cytoplasm. The enzyme catalyses (S)-2,3,4,5-tetrahydrodipicolinate + succinyl-CoA + H2O = (S)-2-succinylamino-6-oxoheptanedioate + CoA. The protein operates within amino-acid biosynthesis; L-lysine biosynthesis via DAP pathway; LL-2,6-diaminopimelate from (S)-tetrahydrodipicolinate (succinylase route): step 1/3. The protein is 2,3,4,5-tetrahydropyridine-2,6-dicarboxylate N-succinyltransferase of Rickettsia prowazekii (strain Madrid E).